Here is a 98-residue protein sequence, read N- to C-terminus: Prolactin-releasing peptide (98 aa).

The first 22 residues, 1–22 (MKAVGAWLLCLLLLGLALQGAA), serve as a signal peptide directing secretion. Phenylalanine 53 carries the phenylalanine amide modification. A propeptide spanning residues 58 to 98 (AAPGDGPRPGPRRELACIPLEGGAEPSRALLGRLTAQLVQE) is cleaved from the precursor.

In terms of tissue distribution, more abundantly expressed in the brainstem than the hypothalamus.

It localises to the secreted. In terms of biological role, stimulates prolactin (PRL) release and regulates the expression of prolactin through its receptor GPR10. May stimulate lactotrophs directly to secrete PRL. In Ovis aries (Sheep), this protein is Prolactin-releasing peptide (PRLH).